Reading from the N-terminus, the 571-residue chain is Proline--tRNA ligase (571 aa).

Belongs to the class-II aminoacyl-tRNA synthetase family. ProS type 1 subfamily. As to quaternary structure, homodimer.

The protein resides in the cytoplasm. It catalyses the reaction tRNA(Pro) + L-proline + ATP = L-prolyl-tRNA(Pro) + AMP + diphosphate. Its function is as follows. Catalyzes the attachment of proline to tRNA(Pro) in a two-step reaction: proline is first activated by ATP to form Pro-AMP and then transferred to the acceptor end of tRNA(Pro). As ProRS can inadvertently accommodate and process non-cognate amino acids such as alanine and cysteine, to avoid such errors it has two additional distinct editing activities against alanine. One activity is designated as 'pretransfer' editing and involves the tRNA(Pro)-independent hydrolysis of activated Ala-AMP. The other activity is designated 'posttransfer' editing and involves deacylation of mischarged Ala-tRNA(Pro). The misacylated Cys-tRNA(Pro) is not edited by ProRS. This chain is Proline--tRNA ligase, found in Glaesserella parasuis serovar 5 (strain SH0165) (Haemophilus parasuis).